The primary structure comprises 105 residues: MYTSIYQNSYVVFIISLIVLLIIFYVFKIGYSTVVVNGKVEKRFNWKYPLAISLVIWVIWYFLLYPPSDVNINSSKQVGGTETSTIGDIVGSGVRQQKINMDNWL.

The next 2 membrane-spanning stretches (helical) occupy residues 10–30 (YVVF…FKIG) and 48–68 (YPLA…YPPS).

It is found in the membrane. This is an uncharacterized protein from Acanthamoeba polyphaga mimivirus (APMV).